Reading from the N-terminus, the 510-residue chain is MKLKPIEVAEILQKEIANINCLSELEEVGQVITVGDGIAQIYGLANVKSGEVVEFKSGVKGLVLNLENDSVGAVIMGDDNQVQQGDNVKRTKEVLEVPVGKALLGRVVDALGNPIDGKGDIASKEYRHIEMKAPGIIERTSVSEPVQTGIKAIDSLIPIGRGQRELIIGDRQTGKTAIAVDTIINQKQAHSLTNESDKIYCIYVAIGQKRSSVAQIVKKLEDAGAMDYTLIVSATASEAAALQFIAPYSACSMGEYFRDNGMHALIIYDDLSKHAVAYRQISLLLRRPPGREAYPGDVFYLHSRLLERAAKMSEAKGSGSLTALPIIETQAGDVSAYIPTNVISITDGQIFLESELFYKGVRPAVNVGISVSRVGSAAQIKAMKQVAGSVKLELAQFRELESFSQFGSDLDPATKAQIDHGKRLVEILKQAQYHPFPVEEQIVSIYVGTKKYLNDVPIQKVKEFEDKMLTEIRLNKKDILESIKNEQRITEETEQKLKAFLENFVKKFVK.

169–176 contacts ATP; it reads GDRQTGKT.

It belongs to the ATPase alpha/beta chains family. As to quaternary structure, F-type ATPases have 2 components, CF(1) - the catalytic core - and CF(0) - the membrane proton channel. CF(1) has five subunits: alpha(3), beta(3), gamma(1), delta(1), epsilon(1). CF(0) has three main subunits: a(1), b(2) and c(9-12). The alpha and beta chains form an alternating ring which encloses part of the gamma chain. CF(1) is attached to CF(0) by a central stalk formed by the gamma and epsilon chains, while a peripheral stalk is formed by the delta and b chains.

The protein resides in the cell inner membrane. The enzyme catalyses ATP + H2O + 4 H(+)(in) = ADP + phosphate + 5 H(+)(out). Its function is as follows. Produces ATP from ADP in the presence of a proton gradient across the membrane. The alpha chain is a regulatory subunit. The polypeptide is ATP synthase subunit alpha (Rickettsia massiliae (strain Mtu5)).